We begin with the raw amino-acid sequence, 349 residues long: Beta-hexosaminidase (349 aa).

Substrate-binding positions include aspartate 64, arginine 72, arginine 138, and 168-169 (KH). Catalysis depends on histidine 181, which acts as the Proton donor/acceptor. Aspartate 252 functions as the Nucleophile in the catalytic mechanism.

Belongs to the glycosyl hydrolase 3 family. NagZ subfamily.

Its subcellular location is the cytoplasm. The enzyme catalyses Hydrolysis of terminal non-reducing N-acetyl-D-hexosamine residues in N-acetyl-beta-D-hexosaminides.. It functions in the pathway cell wall biogenesis; peptidoglycan recycling. Its function is as follows. Plays a role in peptidoglycan recycling by cleaving the terminal beta-1,4-linked N-acetylglucosamine (GlcNAc) from peptide-linked peptidoglycan fragments, giving rise to free GlcNAc, anhydro-N-acetylmuramic acid and anhydro-N-acetylmuramic acid-linked peptides. This chain is Beta-hexosaminidase, found in Nitrosospira multiformis (strain ATCC 25196 / NCIMB 11849 / C 71).